The primary structure comprises 465 residues: UPF0324 membrane protein CC_0425 (465 aa).

The interval 97–132 (HRQPDRAPPARASEQPLRQGRRALRRRPDQRRHRPR) is disordered. A compositionally biased stretch (basic residues) spans 115-132 (QGRRALRRRPDQRRHRPR). The next 10 membrane-spanning stretches (helical) occupy residues 135–157 (AAAL…LMAV), 172–194 (LLAV…GAGL), 219–241 (AALG…GIGA), 251–273 (LAEA…LAAS), 286–308 (TALV…PPIA), 318–340 (AGVF…ASVS), 352–374 (LSRI…RTAQ), 378–400 (ISGL…ARGL), 405–427 (PALV…GAIS), and 442–464 (LAIL…TRIF).

This sequence belongs to the UPF0324 family.

It is found in the cell membrane. In Caulobacter vibrioides (strain ATCC 19089 / CIP 103742 / CB 15) (Caulobacter crescentus), this protein is UPF0324 membrane protein CC_0425.